Consider the following 166-residue polypeptide: 3-isopropylmalate dehydratase small subunit (166 aa).

It belongs to the LeuD family. LeuD type 2 subfamily. Heterodimer of LeuC and LeuD.

The catalysed reaction is (2R,3S)-3-isopropylmalate = (2S)-2-isopropylmalate. It participates in amino-acid biosynthesis; L-leucine biosynthesis; L-leucine from 3-methyl-2-oxobutanoate: step 2/4. Its function is as follows. Catalyzes the isomerization between 2-isopropylmalate and 3-isopropylmalate, via the formation of 2-isopropylmaleate. This Caldicellulosiruptor bescii (strain ATCC BAA-1888 / DSM 6725 / KCTC 15123 / Z-1320) (Anaerocellum thermophilum) protein is 3-isopropylmalate dehydratase small subunit.